Consider the following 283-residue polypeptide: U3 small nucleolar ribonucleoprotein protein IMP4 (283 aa).

Residues P79 to E260 enclose the Brix domain.

As to quaternary structure, component of a heterotrimeric complex containing IMP3, IMP4 and MPP10.

It localises to the nucleus. The protein localises to the nucleolus. Component of the U3 small nucleolar ribonucleoprotein. Required for the early cleavages at sites A0, A1 and A2 during 18S ribosomal pre-RNA processing. This Eremothecium gossypii (strain ATCC 10895 / CBS 109.51 / FGSC 9923 / NRRL Y-1056) (Yeast) protein is U3 small nucleolar ribonucleoprotein protein IMP4 (IMP4).